Here is a 258-residue protein sequence, read N- to C-terminus: Ribosomal RNA small subunit methyltransferase J (258 aa).

S-adenosyl-L-methionine-binding positions include 123–124 and aspartate 177; that span reads ER. Positions 232-258 are disordered; the sequence is IDGPKPSHSLEGKSSRYDIYPKKALKA. A compositionally biased stretch (basic and acidic residues) spans 239-252; the sequence is HSLEGKSSRYDIYP.

The protein belongs to the methyltransferase superfamily. RsmJ family.

Its subcellular location is the cytoplasm. The catalysed reaction is guanosine(1516) in 16S rRNA + S-adenosyl-L-methionine = N(2)-methylguanosine(1516) in 16S rRNA + S-adenosyl-L-homocysteine + H(+). Specifically methylates the guanosine in position 1516 of 16S rRNA. This Pseudomonas putida (strain W619) protein is Ribosomal RNA small subunit methyltransferase J.